The primary structure comprises 126 residues: MIEPISTNDAPGAVGPYSQAIKVGDLLFVSGQLPIDPATGEFNSANAVEQAEQCLKNLQAIARAAGTDLSKTVKTTVLLTDLGDFADINRVYTGFFSTPYPARACYEVKALPKGAKVEIEAVISLT.

Belongs to the RutC family.

This Sinorhizobium fredii (strain NBRC 101917 / NGR234) protein is RutC family protein y4sK.